Reading from the N-terminus, the 47-residue chain is IgA-inducing protein (47 aa).

The N-terminal stretch at 1-24 (MKKRSVSGCNITILAVVFSHLSAG) is a signal peptide.

In terms of tissue distribution, expressed in Peyer patches, spleen, thymus, liver and mesenteric lymph node. Expressed at high levels by dendritic cells, and at lower levels by T-cells, monocytes and B-cells.

The protein resides in the secreted. In terms of biological role, enhances IgA secretion from B-cells stimulated via CD40. This chain is IgA-inducing protein (IGIP), found in Bos taurus (Bovine).